The primary structure comprises 344 residues: Dihydroorotate dehydrogenase (quinone) (344 aa).

FMN is bound by residues 65–69 (AGFDK) and Thr-89. Residue Lys-69 coordinates substrate. 114–118 (NRMGF) lines the substrate pocket. 2 residues coordinate FMN: Asn-145 and Asn-178. Asn-178 lines the substrate pocket. Ser-181 serves as the catalytic Nucleophile. Asn-183 serves as a coordination point for substrate. FMN-binding residues include Lys-215 and Thr-243. 244-245 (NT) contributes to the substrate binding site. FMN is bound by residues Gly-269, Gly-298, and 319-320 (YT).

This sequence belongs to the dihydroorotate dehydrogenase family. Type 2 subfamily. Monomer. The cofactor is FMN.

It localises to the cell membrane. The catalysed reaction is (S)-dihydroorotate + a quinone = orotate + a quinol. It participates in pyrimidine metabolism; UMP biosynthesis via de novo pathway; orotate from (S)-dihydroorotate (quinone route): step 1/1. Catalyzes the conversion of dihydroorotate to orotate with quinone as electron acceptor. This chain is Dihydroorotate dehydrogenase (quinone), found in Clavibacter michiganensis subsp. michiganensis (strain NCPPB 382).